We begin with the raw amino-acid sequence, 199 residues long: uncharacterized protein (199 aa).

Residues 72 to 116 (EIYSEIENEESDIEEMSEEMKAFFAKTQEHRQKLKEQRAAEKRKE) adopt a coiled-coil conformation. Positions 98–117 (TQEHRQKLKEQRAAEKRKEG) are enriched in basic and acidic residues. The disordered stretch occupies residues 98 to 127 (TQEHRQKLKEQRAAEKRKEGQSSSKSQEEY).

This is an uncharacterized protein from Caenorhabditis elegans.